The following is a 148-amino-acid chain: Snaclec B4 (148 aa).

The N-terminal stretch at 1–24 (MGRIIFVSFGLLVVFLSLSGTGAA) is a signal peptide. 3 disulfide bridges follow: cysteine 27–cysteine 38, cysteine 55–cysteine 144, and cysteine 121–cysteine 136. Residues 34 to 145 (YDQHCYKVFD…CRLLGHFVCK (112 aa)) form the C-type lectin domain.

This sequence belongs to the snaclec family. As to quaternary structure, heterodimer; disulfide-linked. As to expression, expressed by the venom gland.

It localises to the secreted. Functionally, interferes with one step of hemostasis (modulation of platelet aggregation, or coagulation cascade, for example). In Macrovipera lebetinus (Levantine viper), this protein is Snaclec B4.